Reading from the N-terminus, the 421-residue chain is Probable pectate lyase C (421 aa).

Residues 1 to 19 (MQPLHTLLALLPLCRSTTA) form the signal peptide. Asparagine 164 and asparagine 201 each carry an N-linked (GlcNAc...) asparagine glycan. The active site involves arginine 204. The region spanning 257 to 292 (NENFHGYVENNYYDPDQDGTLNGNELGVSSSNYGGM) is the EF-hand domain. Ca(2+)-binding residues include aspartate 270, aspartate 272, aspartate 274, threonine 276, and glutamate 281. The segment at 353 to 376 (DFGGVGDLDGGETPTDTDGDGIPD) is disordered. Residues 367-376 (TDTDGDGIPD) show a composition bias toward acidic residues.

The protein belongs to the polysaccharide lyase 1 family. Requires Ca(2+) as cofactor.

The protein localises to the secreted. It carries out the reaction Eliminative cleavage of (1-&gt;4)-alpha-D-galacturonan to give oligosaccharides with 4-deoxy-alpha-D-galact-4-enuronosyl groups at their non-reducing ends.. In terms of biological role, pectinolytic enzyme consist of four classes of enzymes: pectin lyase, polygalacturonase, pectin methylesterase and rhamnogalacturonase. Among pectinolytic enzymes, pectin lyase is the most important in depolymerization of pectin, since it cleaves internal glycosidic bonds of highly methylated pectins. Favors pectate, the anion, over pectin, the methyl ester. The polypeptide is Probable pectate lyase C (plyC) (Emericella nidulans (strain FGSC A4 / ATCC 38163 / CBS 112.46 / NRRL 194 / M139) (Aspergillus nidulans)).